Reading from the N-terminus, the 392-residue chain is Extracellular metalloproteinase 4 (392 aa).

A propeptide spanning residues 1-9 (VHSVVDYVS) is cleaved from the precursor. An N-linked (GlcNAc...) asparagine glycan is attached at Asn-176. Position 193 (His-193) interacts with Zn(2+). Glu-194 is a catalytic residue. His-197 serves as a coordination point for Zn(2+). N-linked (GlcNAc...) asparagine glycans are attached at residues Asn-359 and Asn-385.

Belongs to the peptidase M36 family. Zn(2+) serves as cofactor.

Its subcellular location is the secreted. Functionally, secreted metalloproteinase probably acting as a virulence factor. The polypeptide is Extracellular metalloproteinase 4 (MEP4) (Trichophyton soudanense).